We begin with the raw amino-acid sequence, 198 residues long: Recombination protein RecR (198 aa).

The C4-type zinc-finger motif lies at 56–71 (CDTCGNVDTQNPCGIC). The Toprim domain occupies 79-174 (KSICVVEDVA…RITQLAHGLP (96 aa)).

This sequence belongs to the RecR family.

May play a role in DNA repair. It seems to be involved in an RecBC-independent recombinational process of DNA repair. It may act with RecF and RecO. This chain is Recombination protein RecR, found in Erythrobacter litoralis (strain HTCC2594).